The chain runs to 620 residues: Dihydroxy-acid dehydratase (620 aa).

Residue D82 coordinates Mg(2+). [2Fe-2S] cluster is bound at residue C123. Mg(2+) contacts are provided by D124 and K125. Residue K125 is modified to N6-carboxylysine. C197 serves as a coordination point for [2Fe-2S] cluster. E493 contributes to the Mg(2+) binding site. Residue S519 is the Proton acceptor of the active site.

Belongs to the IlvD/Edd family. In terms of assembly, homodimer. [2Fe-2S] cluster is required as a cofactor. Mg(2+) serves as cofactor.

The catalysed reaction is (2R)-2,3-dihydroxy-3-methylbutanoate = 3-methyl-2-oxobutanoate + H2O. The enzyme catalyses (2R,3R)-2,3-dihydroxy-3-methylpentanoate = (S)-3-methyl-2-oxopentanoate + H2O. The protein operates within amino-acid biosynthesis; L-isoleucine biosynthesis; L-isoleucine from 2-oxobutanoate: step 3/4. It participates in amino-acid biosynthesis; L-valine biosynthesis; L-valine from pyruvate: step 3/4. Functionally, functions in the biosynthesis of branched-chain amino acids. Catalyzes the dehydration of (2R,3R)-2,3-dihydroxy-3-methylpentanoate (2,3-dihydroxy-3-methylvalerate) into 2-oxo-3-methylpentanoate (2-oxo-3-methylvalerate) and of (2R)-2,3-dihydroxy-3-methylbutanoate (2,3-dihydroxyisovalerate) into 2-oxo-3-methylbutanoate (2-oxoisovalerate), the penultimate precursor to L-isoleucine and L-valine, respectively. The chain is Dihydroxy-acid dehydratase from Bifidobacterium longum (strain NCC 2705).